A 295-amino-acid polypeptide reads, in one-letter code: Putative F-box protein At5g44220 (295 aa).

An F-box domain is found at 56–102 (STNSDLLPMDLIKEILKRLPAKTLARFLCVSKLWSSIIRSRDLMKLF).

This is Putative F-box protein At5g44220 from Arabidopsis thaliana (Mouse-ear cress).